The chain runs to 435 residues: Transcriptional enhancer factor TEF-5 (435 aa).

Polar residues predominate over residues methionine 1–proline 12. The interval methionine 1 to valine 34 is disordered. An N-acetylalanine modification is found at alanine 2. Positions glutamate 14–aspartate 28 are enriched in basic and acidic residues. Positions aspartate 28 to glutamate 104 form a DNA-binding region, TEA. The residue at position 148 (serine 148) is a Phosphoserine. The transcriptional activation stretch occupies residues glycine 173–aspartate 435.

Interacts with YAP1 and WWTR1/TAZ. Preferentially expressed in the placenta.

It localises to the nucleus. Functionally, transcription factor which plays a key role in the Hippo signaling pathway, a pathway involved in organ size control and tumor suppression by restricting proliferation and promoting apoptosis. The core of this pathway is composed of a kinase cascade wherein MST1/MST2, in complex with its regulatory protein SAV1, phosphorylates and activates LATS1/2 in complex with its regulatory protein MOB1, which in turn phosphorylates and inactivates YAP1 oncoprotein and WWTR1/TAZ. Acts by mediating gene expression of YAP1 and WWTR1/TAZ, thereby regulating cell proliferation, migration and epithelial mesenchymal transition (EMT) induction. Binds to multiple functional elements of the human chorionic somatomammotropin-B gene enhancer. The chain is Transcriptional enhancer factor TEF-5 (TEAD3) from Homo sapiens (Human).